The primary structure comprises 465 residues: GTPase Der (465 aa).

EngA-type G domains are found at residues 3–167 and 179–352; these read PLVA…PERS and IHIA…VSAL. GTP contacts are provided by residues 9-16, 57-61, 119-122, 185-192, 232-236, and 297-300; these read GRPNVGKS, DTGGM, NKID, DTAGL, and NKWD. Residues 353-437 enclose the KH-like domain; it reads RQFSTSEVNK…PVRFLFREGD (85 aa).

Belongs to the TRAFAC class TrmE-Era-EngA-EngB-Septin-like GTPase superfamily. EngA (Der) GTPase family. Associates with the 50S ribosomal subunit.

In terms of biological role, GTPase that plays an essential role in the late steps of ribosome biogenesis. This chain is GTPase Der, found in Xylella fastidiosa (strain M12).